Reading from the N-terminus, the 278-residue chain is Indole-3-glycerol phosphate synthase (278 aa).

This sequence belongs to the TrpC family.

The enzyme catalyses 1-(2-carboxyphenylamino)-1-deoxy-D-ribulose 5-phosphate + H(+) = (1S,2R)-1-C-(indol-3-yl)glycerol 3-phosphate + CO2 + H2O. It functions in the pathway amino-acid biosynthesis; L-tryptophan biosynthesis; L-tryptophan from chorismate: step 4/5. In Pseudomonas fluorescens (strain ATCC BAA-477 / NRRL B-23932 / Pf-5), this protein is Indole-3-glycerol phosphate synthase.